Here is a 239-residue protein sequence, read N- to C-terminus: Regulator of G-protein signaling 20 (239 aa).

The interval 1–29 is disordered; that stretch reads MRTANGGPRARASPSASPADPGLPEGSER. Residues 8-19 show a composition bias toward low complexity; sequence PRARASPSASPA. The 117-residue stretch at 113 to 229 folds into the RGS domain; sequence SFDNLMVTPA…MNSTVYKDLL (117 aa).

In terms of assembly, forms a complex with G(alpha)z/i2 subunits and mu-opioid receptors; the formation of this complex results in mu-opioid receptor desensitization. Interacts with OPRM1. In terms of processing, fatty acylated. Heavily palmitoylated in the cysteine string motif. Post-translationally, N- and O-glycosylated in synapsomal membranes. Serine phosphorylated in synapsomal membranes. In terms of processing, sumoylated with SUMO1, SUMO2 and SUMO3. Sumoylation increases binding to the G-proteins, G(alpha)-i2 and G(z), and interaction with mu-opioid receptors.

The protein localises to the membrane. It is found in the nucleus. Its subcellular location is the cytoplasm. In terms of biological role, inhibits signal transduction by increasing the GTPase activity of G protein alpha subunits thereby driving them into their inactive GDP-bound form. Binds selectively to G(z)-alpha and G(alpha)-i2 subunits, accelerates their GTPase activity and regulates their signaling activities. The G(z)-alpha activity is inhibited by the phosphorylation and palmitoylation of the G-protein. Negatively regulates mu-opioid receptor-mediated activation of the G-proteins. The polypeptide is Regulator of G-protein signaling 20 (Rgs20) (Mus musculus (Mouse)).